Consider the following 168-residue polypeptide: Ribosome maturation factor RimM (168 aa).

The PRC barrel domain occupies 95–168 (KEGYYWSDLI…QIMVDWELDY (74 aa)).

The protein belongs to the RimM family. In terms of assembly, binds ribosomal protein uS19.

The protein localises to the cytoplasm. An accessory protein needed during the final step in the assembly of 30S ribosomal subunit, possibly for assembly of the head region. Essential for efficient processing of 16S rRNA. May be needed both before and after RbfA during the maturation of 16S rRNA. It has affinity for free ribosomal 30S subunits but not for 70S ribosomes. The chain is Ribosome maturation factor RimM from Nitrosomonas eutropha (strain DSM 101675 / C91 / Nm57).